Consider the following 466-residue polypeptide: GATA-binding factor 2 (466 aa).

2 stretches are compositionally biased toward low complexity: residues 139–155 (GSSTSSTASVSSLTPAS) and 174–188 (PDPNSTSAASPSSSA). Residues 139–196 (GSSTSSTASVSSLTPASHSGSHLFGFPPTPPKEVSPDPNSTSAASPSSSAGARQEDKD) form a disordered region. 2 GATA-type zinc fingers span residues 281–305 (CVNCGATATPLWRRDGTGHYLCNAC) and 335–359 (CANCQTTTTTLWRRNANGDPVCNAC). The segment at 436–466 (GHILPTPTPIHPSSSISFGHPHPSSMVTAMG) is disordered.

In terms of tissue distribution, expressed in all developmental stages of erythroid cells but is additionally found in a limited subset of other tissues.

It is found in the nucleus. Functionally, transcriptional activator which probably serves as a general switch factor for cell-specific development. It binds to DNA sites with the consensus sequence 5'-[AT]GATA[AG]-3' within regulatory regions of genes. This Gallus gallus (Chicken) protein is GATA-binding factor 2 (GATA2).